A 180-amino-acid chain; its full sequence is Insertion element IS1296 uncharacterized 21.4 kDa protein (180 aa).

It belongs to the IS150/IS1296 orfA family.

The sequence is that of Insertion element IS1296 uncharacterized 21.4 kDa protein from Mycoplasma mycoides subsp. mycoides SC.